A 73-amino-acid chain; its full sequence is Conotoxin Cl14.8 (73 aa).

Residues 1 to 19 form the signal peptide; sequence MKLSVTFIALMLTMTLTQG. Residues 20-47 constitute a propeptide that is removed on maturation; that stretch reads FVLQAIDGRDNSGLDDLSEADSMEHQLQ.

This sequence belongs to the conotoxin L superfamily. Contains 2 disulfide bonds. Expressed by the venom duct.

Its subcellular location is the secreted. The protein is Conotoxin Cl14.8 of Californiconus californicus (California cone).